We begin with the raw amino-acid sequence, 1415 residues long: DNA-directed RNA polymerase subunit beta' (1415 aa).

C70, C72, C85, and C88 together coordinate Zn(2+). D461, D463, and D465 together coordinate Mg(2+). Zn(2+) contacts are provided by C820, C894, C901, and C904.

The protein belongs to the RNA polymerase beta' chain family. The RNAP catalytic core consists of 2 alpha, 1 beta, 1 beta' and 1 omega subunit. When a sigma factor is associated with the core the holoenzyme is formed, which can initiate transcription. Requires Mg(2+) as cofactor. The cofactor is Zn(2+).

The enzyme catalyses RNA(n) + a ribonucleoside 5'-triphosphate = RNA(n+1) + diphosphate. Functionally, DNA-dependent RNA polymerase catalyzes the transcription of DNA into RNA using the four ribonucleoside triphosphates as substrates. In Cupriavidus necator (strain ATCC 17699 / DSM 428 / KCTC 22496 / NCIMB 10442 / H16 / Stanier 337) (Ralstonia eutropha), this protein is DNA-directed RNA polymerase subunit beta'.